The chain runs to 455 residues: Phosphoglucosamine mutase (455 aa).

Residue Ser104 is the Phosphoserine intermediate of the active site. Mg(2+)-binding residues include Ser104, Asp253, Asp255, and Asp257. The residue at position 104 (Ser104) is a Phosphoserine.

This sequence belongs to the phosphohexose mutase family. Requires Mg(2+) as cofactor. In terms of processing, activated by phosphorylation.

It carries out the reaction alpha-D-glucosamine 1-phosphate = D-glucosamine 6-phosphate. Its function is as follows. Catalyzes the conversion of glucosamine-6-phosphate to glucosamine-1-phosphate. In Psychrobacter cryohalolentis (strain ATCC BAA-1226 / DSM 17306 / VKM B-2378 / K5), this protein is Phosphoglucosamine mutase.